Consider the following 69-residue polypeptide: Large ribosomal subunit protein uL29 (69 aa).

Belongs to the universal ribosomal protein uL29 family.

The protein is Large ribosomal subunit protein uL29 of Staphylococcus aureus (strain Mu3 / ATCC 700698).